The sequence spans 119 residues: Large ribosomal subunit protein bL20 (119 aa).

It belongs to the bacterial ribosomal protein bL20 family.

Functionally, binds directly to 23S ribosomal RNA and is necessary for the in vitro assembly process of the 50S ribosomal subunit. It is not involved in the protein synthesizing functions of that subunit. In Bacillus velezensis (strain DSM 23117 / BGSC 10A6 / LMG 26770 / FZB42) (Bacillus amyloliquefaciens subsp. plantarum), this protein is Large ribosomal subunit protein bL20.